The sequence spans 646 residues: Autophagy-related protein 28 (646 aa).

2 disordered regions span residues 1-148 and 221-245; these read MSSP…HVDN and PTRS…RGLK. Positions 12 to 21 are enriched in polar residues; that stretch reads SPRQRLSNPL. A compositionally biased stretch (low complexity) spans 63–75; the sequence is SATSTRRSSSPAS. A compositionally biased stretch (polar residues) spans 106–122; sequence MMMNQHPSRQSTVSSHG. Coiled-coil stretches lie at residues 283–350 and 485–514; these read LDKM…MEDV and QQAA…ESKH. 2 disordered regions span residues 475-494 and 546-612; these read SQAG…SQLS and AAAV…RGSA. Composition is skewed to basic and acidic residues over residues 557–575 and 588–597; these read STDK…SHDE and RMEDHDHDPP.

It belongs to the ATG28 family.

The protein localises to the cytoplasm. The protein resides in the vacuole membrane. It localises to the cytoplasmic vesicle membrane. Its function is as follows. Required for the autophagic degradation of peroxisomes called pexophagy, but not essential for general autophagy. Involved in resistance to elevated pH. This is Autophagy-related protein 28 from Gibberella zeae (strain ATCC MYA-4620 / CBS 123657 / FGSC 9075 / NRRL 31084 / PH-1) (Wheat head blight fungus).